Reading from the N-terminus, the 287-residue chain is 4-diphosphocytidyl-2-C-methyl-D-erythritol kinase (287 aa).

Lysine 12 is an active-site residue. Position 95 to 105 (95 to 105) interacts with ATP; that stretch reads PAQAGMGGGSS. The active site involves aspartate 137.

Belongs to the GHMP kinase family. IspE subfamily.

It carries out the reaction 4-CDP-2-C-methyl-D-erythritol + ATP = 4-CDP-2-C-methyl-D-erythritol 2-phosphate + ADP + H(+). It participates in isoprenoid biosynthesis; isopentenyl diphosphate biosynthesis via DXP pathway; isopentenyl diphosphate from 1-deoxy-D-xylulose 5-phosphate: step 3/6. Its function is as follows. Catalyzes the phosphorylation of the position 2 hydroxy group of 4-diphosphocytidyl-2C-methyl-D-erythritol. The protein is 4-diphosphocytidyl-2-C-methyl-D-erythritol kinase of Delftia acidovorans (strain DSM 14801 / SPH-1).